Consider the following 545-residue polypeptide: ATP synthase subunit alpha (545 aa).

An ATP-binding site is contributed by glycine 173 to threonine 180.

Belongs to the ATPase alpha/beta chains family. As to quaternary structure, F-type ATPases have 2 components, CF(1) - the catalytic core - and CF(0) - the membrane proton channel. CF(1) has five subunits: alpha(3), beta(3), gamma(1), delta(1), epsilon(1). CF(0) has three main subunits: a(1), b(2) and c(9-12). The alpha and beta chains form an alternating ring which encloses part of the gamma chain. CF(1) is attached to CF(0) by a central stalk formed by the gamma and epsilon chains, while a peripheral stalk is formed by the delta and b chains.

Its subcellular location is the cell membrane. It carries out the reaction ATP + H2O + 4 H(+)(in) = ADP + phosphate + 5 H(+)(out). Functionally, produces ATP from ADP in the presence of a proton gradient across the membrane. The alpha chain is a regulatory subunit. This chain is ATP synthase subunit alpha, found in Renibacterium salmoninarum (strain ATCC 33209 / DSM 20767 / JCM 11484 / NBRC 15589 / NCIMB 2235).